The following is a 535-amino-acid chain: Potassium channel subfamily K member 10 (535 aa).

At 1 to 68 (MYFSYIGYFF…GLQTVMKWKT (68 aa)) the chain is on the cytoplasmic side. A helical transmembrane segment spans residues 69 to 89 (VVAIFVVVVVYLVTGGLVFRA). Positions 151–177 (LGSAFFFAGTVITTIGYGNIAPSTEGG) form an intramembrane region, pore-forming. K(+) is bound by residues Thr164, Ile165, Gly166, and Tyr167. The selectivity filter 1 stretch occupies residues 164–169 (TIGYGN). The helical transmembrane segment at 179 to 199 (IFCILYAIFGIPLFGFLLAGI) threads the bilayer. Residues 200–230 (GDQLGTIFGKSIARVEKVFRKKQVSQTKIRV) lie on the Cytoplasmic side of the membrane. The helical transmembrane segment at 231-251 (ISTILFILAGCIVFVTIPAVI) threads the bilayer. Positions 260 to 291 (ALESIYFVVVTLTTVGFGDFVAGGNAGINYRE) form an intramembrane region, pore-forming. K(+)-binding residues include Thr273, Val274, Gly275, and Phe276. Positions 273 to 278 (TVGFGD) are selectivity filter 2. A helical transmembrane segment spans residues 296–316 (LVWFWILVGLAYFAAVLSMIG). The Cytoplasmic segment spans residues 317-535 (DWLRVLSKKT…ENNSLLEDRN (219 aa)). 2 disordered regions span residues 410–438 (QESI…ASED) and 510–535 (EMEN…EDRN). Residues 525 to 535 (LENNSLLEDRN) are compositionally biased toward polar residues.

In terms of assembly, homodimer; disulfide-linked. Forms heterodimers with other 2-pore domain K(+) channel subunits, such as KCNK2, KCNK4 and KCNK18. Detected in dorsal root ganglia (DRG) neurons (at protein level).

It is found in the cell membrane. It catalyses the reaction K(+)(in) = K(+)(out). It carries out the reaction Rb(+)(in) = Rb(+)(out). The catalysed reaction is Cs(+)(in) = Cs(+)(out). Its activity is regulated as follows. Activated by stimuli such as mechanical stretch, acidic pH and polyunsaturated free fatty acids. Activated by a dihydroacridine analog, ML67-33. Inhibited by polycationic dye ruthenium red. Selectively activated by T2A3 (2-[(4-chloro-3-methylphenyl)amino] benzoic acid). Functionally, k(+) channel that conducts voltage-dependent outward rectifying currents upon membrane depolarization. Voltage sensing is coupled to K(+) electrochemical gradient in an 'ion flux gating' mode where outward but not inward ion flow opens the gate. Converts to voltage-independent 'leak' conductance mode upon stimulation by various stimuli including mechanical membrane stretch, acidic pH, heat and lipids. Homo- and heterodimerizes to form functional channels with distinct regulatory and gating properties. In trigeminal ganglia sensory neurons, the heterodimer of KCNK10/TREK-2 and KCNK18/TRESK inhibits neuronal firing and neurogenic inflammation by stabilizing the resting membrane potential at K(+) equilibrium potential as well as by regulating the threshold of action potentials and the spike frequency. Permeable to other monovalent ions such as Rb(+) and Cs(+). The protein is Potassium channel subfamily K member 10 of Mus musculus (Mouse).